The sequence spans 528 residues: Ecdysteroid UDP-glucosyltransferase (528 aa).

The signal sequence occupies residues Met-1 to Ala-32.

The protein belongs to the UDP-glycosyltransferase family.

Its function is as follows. Catalyzes the transfer of glucose from UDP-glucose to ecdysteroids which are insect molting hormones. Expression of egt interferes with normal insect development and block molting. The polypeptide is Ecdysteroid UDP-glucosyltransferase (EGT) (Mamestra brassicae nuclear polyhedrosis virus (MbNPV)).